The sequence spans 260 residues: Flap endonuclease Xni (260 aa).

A Mg(2+)-binding site is contributed by Asp-104. The region spanning 160–249 (VSPQQLTDYW…LNGNLQQLRL (90 aa)) is the 5'-3' exonuclease domain. K(+)-binding residues include Leu-171, Ala-172, Pro-180, Val-182, and Ile-185. The segment at 184-189 (GIGPKS) is interaction with DNA.

This sequence belongs to the Xni family. Mg(2+) is required as a cofactor. K(+) serves as cofactor.

Its function is as follows. Has flap endonuclease activity. During DNA replication, flap endonucleases cleave the 5'-overhanging flap structure that is generated by displacement synthesis when DNA polymerase encounters the 5'-end of a downstream Okazaki fragment. The sequence is that of Flap endonuclease Xni from Pectobacterium carotovorum subsp. carotovorum (strain PC1).